Reading from the N-terminus, the 100-residue chain is Small ribosomal subunit protein uS14c (100 aa).

The protein belongs to the universal ribosomal protein uS14 family. Part of the 30S ribosomal subunit.

It localises to the plastid. It is found in the chloroplast. In terms of biological role, binds 16S rRNA, required for the assembly of 30S particles. The protein is Small ribosomal subunit protein uS14c of Phaeodactylum tricornutum (strain CCAP 1055/1).